Reading from the N-terminus, the 72-residue chain is Translational regulator CsrA (72 aa).

It belongs to the CsrA/RsmA family. As to quaternary structure, homodimer; the beta-strands of each monomer intercalate to form a hydrophobic core, while the alpha-helices form wings that extend away from the core.

The protein localises to the cytoplasm. In terms of biological role, a translational regulator that binds mRNA to regulate translation initiation and/or mRNA stability. Usually binds in the 5'-UTR at or near the Shine-Dalgarno sequence preventing ribosome-binding, thus repressing translation. Its main target seems to be the major flagellin gene, while its function is anatagonized by FliW. The sequence is that of Translational regulator CsrA from Clostridium botulinum (strain ATCC 19397 / Type A).